Here is a 316-residue protein sequence, read N- to C-terminus: Insulin-like growth factor-binding protein 2 (316 aa).

The first 29 residues, 1-29 (MLPRLGGTALSLLPLLLLLLGTGGRGARA), serve as a signal peptide directing secretion. Residues 31-126 (VLFRCPPCTP…VLGEGTCEKR (96 aa)) enclose the IGFBP N-terminal domain. Cystine bridges form between Cys-35–Cys-76, Cys-38–Cys-78, Cys-46–Cys-79, Cys-68–Cys-82, Cys-90–Cys-103, and Cys-97–Cys-123. Residues 189-217 (QHRQMGKGGKHHLGLEEPKKLRPPPARTP) form a disordered region. The region spanning 215–297 (RTPCQQELDQ…APTIRGDPEC (83 aa)) is the Thyroglobulin type-1 domain. 3 cysteine pairs are disulfide-bonded: Cys-218–Cys-252, Cys-263–Cys-274, and Cys-276–Cys-297. Positions 292–294 (RGD) match the Cell attachment site motif.

Interacts with IGF1. Interacts with IGF2. Interacts (via RGD motif) with integrin alpha5/ITGA5; this interaction induces cell migration, adhesion or apoptosis according to the context. Interacts with PTPRB; this interaction leads to PTPRB dimerization and inactivation. Post-translationally, cleaved by MMP9 leading to release of free IGF2 from IGFBP2-IGF2 complex, which contributes to enhance the motility and the growth of astrocytes. O-glycosylated.

It is found in the secreted. In terms of biological role, may have both growth-inhibiting and growth-promoting effects, depending on tissue type; increases IGF-induced DNA synthesis in the uterine epithelium. IGF-binding proteins prolong the half-life of the IGFs and have been shown to either inhibit or stimulate the growth promoting effects of the IGFs on cell culture. They alter the interaction of IGFs with their cell surface receptors. Functionally, multifunctional protein that plays a critical role in regulating the availability of IGFs such as IGF1 and IGF2 to their receptors and thereby regulates IGF-mediated cellular processes including proliferation, differentiation, and apoptosis in a cell-type specific manner. Functions coordinately with receptor protein tyrosine phosphatase beta/PTPRB and the IGF1 receptor to regulate IGF1-mediated signaling by stimulating the phosphorylation of PTEN leading to its inactivation and AKT1 activation. Plays a positive role in cell migration via interaction with integrin alpha5/ITGA5 through an RGD motif. Additionally, interaction with ITGA5/ITGB1 enhances the adhesion of endothelial progenitor cells to endothelial cells. Upon mitochondrial damage, facilitates apoptosis with ITGA5 of podocytes, and then activates the phosphorylation of focal adhesion kinase (FAK)-mediated mitochondrial injury. In Sus scrofa (Pig), this protein is Insulin-like growth factor-binding protein 2 (IGFBP2).